A 387-amino-acid chain; its full sequence is Major outer membrane porin (387 aa).

An N-terminal signal peptide occupies residues 1 to 22 (MKKLLKSVLAFAVLGSASSLHA).

It belongs to the chlamydial porin (CP) (TC 1.B.2) family. Part of a disulfide cross-linked outer membrane complex (COMC) composed of the major outer membrane porin (MOMP), the small cysteine-rich protein (OmcA) and the large cysteine-rich periplasmic protein (OmcB).

Its subcellular location is the cell outer membrane. Its function is as follows. In elementary bodies (EBs, the infectious stage, which is able to survive outside the host cell) provides the structural integrity of the outer envelope through disulfide cross-links with the small cysteine-rich protein and the large cysteine-rich periplasmic protein. It has been described in publications as the Sarkosyl-insoluble COMC (Chlamydia outer membrane complex), and serves as the functional equivalent of peptidoglycan. In terms of biological role, permits diffusion of specific solutes through the outer membrane. In Chlamydia muridarum (strain MoPn / Nigg), this protein is Major outer membrane porin (ompA).